A 152-amino-acid chain; its full sequence is D-aminoacyl-tRNA deacylase (152 aa).

The Gly-cisPro motif, important for rejection of L-amino acids motif lies at 142 to 143 (GP).

This sequence belongs to the DTD family. In terms of assembly, homodimer.

It localises to the cytoplasm. It carries out the reaction glycyl-tRNA(Ala) + H2O = tRNA(Ala) + glycine + H(+). The enzyme catalyses a D-aminoacyl-tRNA + H2O = a tRNA + a D-alpha-amino acid + H(+). An aminoacyl-tRNA editing enzyme that deacylates mischarged D-aminoacyl-tRNAs. Also deacylates mischarged glycyl-tRNA(Ala), protecting cells against glycine mischarging by AlaRS. Acts via tRNA-based rather than protein-based catalysis; rejects L-amino acids rather than detecting D-amino acids in the active site. By recycling D-aminoacyl-tRNA to D-amino acids and free tRNA molecules, this enzyme counteracts the toxicity associated with the formation of D-aminoacyl-tRNA entities in vivo and helps enforce protein L-homochirality. The protein is D-aminoacyl-tRNA deacylase of Paraburkholderia xenovorans (strain LB400).